Here is a 1132-residue protein sequence, read N- to C-terminus: Tyrosine-protein kinase JAK2 (1132 aa).

The segment at 1-239 (MGMACLTMTE…RYRFRRFIQQ (239 aa)) is interaction with cytokine/interferon/growth hormone receptors. Positions 37-380 (PVLQVYLYHS…GYYRLTADAH (344 aa)) constitute an FERM domain. The residue at position 119 (Y119) is a Phosphotyrosine; by autocatalysis. Residues Y372 and Y373 each carry the phosphotyrosine modification. One can recognise an SH2; atypical domain in the interval 401 to 482 (HGPISMDFAI…NLKDLLNCYQ (82 aa)). S523 is subject to Phosphoserine. The 265-residue stretch at 545–809 (LIFNESLGQG…AVIRDLNSLF (265 aa)) folds into the Protein kinase 1 domain. Phosphotyrosine occurs at positions 570 and 813. The region spanning 849-1124 (LKFLQQLGKG…SFRDLSLRVD (276 aa)) is the Protein kinase 2 domain. 855–863 (LGKGNFGSV) is a binding site for ATP. At Y868 the chain carries Phosphotyrosine; by autocatalysis. K882 contributes to the ATP binding site. Residues Y966 and Y972 each carry the phosphotyrosine; by autocatalysis modification. The active-site Proton acceptor is D976. 2 positions are modified to phosphotyrosine; by autocatalysis: Y1007 and Y1008.

It belongs to the protein kinase superfamily. Tyr protein kinase family. JAK subfamily. Interacts with IL23R, SKB1 and STAM2. Interacts with EPOR. Interacts with LYN. Interacts with SIRPA. Interacts with SH2B1. Interacts with TEC. Interacts with IFNGR2 (via intracellular domain). Interacts with LEPR (Isoform B). Interacts with HSP90AB1; promotes functional activation in a heat shock-dependent manner. Interacts with STRA6. Interacts with ASB2; the interaction targets JAK2 for Notch-induced proteasomal degradation. Interacts with MPL/TPOR. The cofactor is Mg(2+). Autophosphorylated, leading to regulate its activity. Leptin promotes phosphorylation on tyrosine residues, including phosphorylation on Tyr-813. Autophosphorylation on Tyr-119 in response to EPO down-regulates its kinase activity. Autophosphorylation on Tyr-868, Tyr-966 and Tyr-972 in response to growth hormone (GH) are required for maximal kinase activity. Also phosphorylated by TEC. Phosphorylated on tyrosine residues in response to interferon gamma signaling. Phosphorylated on tyrosine residues in response to a signaling cascade that is activated by increased cellular retinol. In terms of processing, undergoes Notch-induced ubiquitination and subsequent proteasomal degradation which is mediated by ASB1 or ASB2, the substrate-recognition components of probable ECS E3 ubiquitin-protein ligase complexes. As to expression, ubiquitously expressed throughout most tissues.

The protein localises to the endomembrane system. Its subcellular location is the cytoplasm. The protein resides in the nucleus. The catalysed reaction is L-tyrosyl-[protein] + ATP = O-phospho-L-tyrosyl-[protein] + ADP + H(+). Its activity is regulated as follows. Regulated by autophosphorylation, can both activate or decrease activity. Heme regulates its activity by enhancing the phosphorylation on Tyr-1007 and Tyr-1008. Non-receptor tyrosine kinase involved in various processes such as cell growth, development, differentiation or histone modifications. Mediates essential signaling events in both innate and adaptive immunity. In the cytoplasm, plays a pivotal role in signal transduction via its association with type I receptors such as growth hormone (GHR), prolactin (PRLR), leptin (LEPR), erythropoietin (EPOR), thrombopoietin receptor (MPL/TPOR); or type II receptors including IFN-alpha, IFN-beta, IFN-gamma and multiple interleukins. Following ligand-binding to cell surface receptors, phosphorylates specific tyrosine residues on the cytoplasmic tails of the receptor, creating docking sites for STATs proteins. Subsequently, phosphorylates the STATs proteins once they are recruited to the receptor. Phosphorylated STATs then form homodimer or heterodimers and translocate to the nucleus to activate gene transcription. For example, cell stimulation with erythropoietin (EPO) during erythropoiesis leads to JAK2 autophosphorylation, activation, and its association with erythropoietin receptor (EPOR) that becomes phosphorylated in its cytoplasmic domain. Then, STAT5 (STAT5A or STAT5B) is recruited, phosphorylated and activated by JAK2. Once activated, dimerized STAT5 translocates into the nucleus and promotes the transcription of several essential genes involved in the modulation of erythropoiesis. Part of a signaling cascade that is activated by increased cellular retinol and that leads to the activation of STAT5 (STAT5A or STAT5B). In addition, JAK2 mediates angiotensin-2-induced ARHGEF1 phosphorylation. Plays a role in cell cycle by phosphorylating CDKN1B. Cooperates with TEC through reciprocal phosphorylation to mediate cytokine-driven activation of FOS transcription. In the nucleus, plays a key role in chromatin by specifically mediating phosphorylation of 'Tyr-41' of histone H3 (H3Y41ph), a specific tag that promotes exclusion of CBX5 (HP1 alpha) from chromatin. Up-regulates the potassium voltage-gated channel activity of KCNA3. This is Tyrosine-protein kinase JAK2 from Mus musculus (Mouse).